The chain runs to 301 residues: MRLAFMGSPGFAVPALRALHAAGHDIVAVYCQPPRPVGRGHRIHKCPVHEAAEALGLTVRTPERLRRDDAERAYFRALDLDAAVVAAYGQILPADMLVAPRRGCINIHASLLPRWRGAAPIHAAILAGDAQTGVTIMQMDEGLDTGATLLAEAVPIGPEDTMVDLLDRLADLGAALVIKVLDGNFPPVPQPEGGVTYAPKLSKADAEIDWSASAAVILRRIRAFRPWPGTETRLDGEALKIIRAEPAAGQGEPGTVLDDRLAIACGDAAIRPTLVQRAGRAAMQAEAFLRGHPVAIGTRLG.

Position 110–113 (110–113) interacts with (6S)-5,6,7,8-tetrahydrofolate; it reads SLLP.

This sequence belongs to the Fmt family.

It carries out the reaction L-methionyl-tRNA(fMet) + (6R)-10-formyltetrahydrofolate = N-formyl-L-methionyl-tRNA(fMet) + (6S)-5,6,7,8-tetrahydrofolate + H(+). Attaches a formyl group to the free amino group of methionyl-tRNA(fMet). The formyl group appears to play a dual role in the initiator identity of N-formylmethionyl-tRNA by promoting its recognition by IF2 and preventing the misappropriation of this tRNA by the elongation apparatus. This chain is Methionyl-tRNA formyltransferase, found in Acidiphilium cryptum (strain JF-5).